Here is a 318-residue protein sequence, read N- to C-terminus: Aspartate carbamoyltransferase catalytic subunit (318 aa).

Positions 58 and 59 each coordinate carbamoyl phosphate. Lys-86 provides a ligand contact to L-aspartate. Carbamoyl phosphate is bound by residues Arg-108, His-141, and Gln-144. L-aspartate-binding residues include Arg-174 and Arg-226. The carbamoyl phosphate site is built by Gly-270 and Pro-271.

It belongs to the aspartate/ornithine carbamoyltransferase superfamily. ATCase family. Heterododecamer (2C3:3R2) of six catalytic PyrB chains organized as two trimers (C3), and six regulatory PyrI chains organized as three dimers (R2).

The catalysed reaction is carbamoyl phosphate + L-aspartate = N-carbamoyl-L-aspartate + phosphate + H(+). The protein operates within pyrimidine metabolism; UMP biosynthesis via de novo pathway; (S)-dihydroorotate from bicarbonate: step 2/3. Functionally, catalyzes the condensation of carbamoyl phosphate and aspartate to form carbamoyl aspartate and inorganic phosphate, the committed step in the de novo pyrimidine nucleotide biosynthesis pathway. The polypeptide is Aspartate carbamoyltransferase catalytic subunit (Lactobacillus gasseri (strain ATCC 33323 / DSM 20243 / BCRC 14619 / CIP 102991 / JCM 1131 / KCTC 3163 / NCIMB 11718 / NCTC 13722 / AM63)).